We begin with the raw amino-acid sequence, 292 residues long: Pantothenate synthetase (292 aa).

32–39 (MGFLHEGH) provides a ligand contact to ATP. His-39 acts as the Proton donor in catalysis. Residue Gln-63 coordinates (R)-pantoate. Residue Gln-63 coordinates beta-alanine. 150-153 (GEKD) contributes to the ATP binding site. Gln-156 contacts (R)-pantoate. ATP is bound by residues Val-179 and 187-190 (MSSR).

It belongs to the pantothenate synthetase family. In terms of assembly, homodimer.

It localises to the cytoplasm. It catalyses the reaction (R)-pantoate + beta-alanine + ATP = (R)-pantothenate + AMP + diphosphate + H(+). The protein operates within cofactor biosynthesis; (R)-pantothenate biosynthesis; (R)-pantothenate from (R)-pantoate and beta-alanine: step 1/1. Its function is as follows. Catalyzes the condensation of pantoate with beta-alanine in an ATP-dependent reaction via a pantoyl-adenylate intermediate. This Myxococcus xanthus (strain DK1622) protein is Pantothenate synthetase.